We begin with the raw amino-acid sequence, 192 residues long: UPF0301 protein Jann_3896 (192 aa).

This sequence belongs to the UPF0301 (AlgH) family.

This Jannaschia sp. (strain CCS1) protein is UPF0301 protein Jann_3896.